Consider the following 763-residue polypeptide: Phosphoglycerol transferase I (763 aa).

4 helical membrane passes run 1-21 (MSEL…AWKA), 24-44 (NTWW…LNIT), 77-97 (ILPG…LGWI), and 108-128 (VGYS…SPAF).

It belongs to the OpgB family.

The protein resides in the cell inner membrane. It carries out the reaction a phosphatidylglycerol + a membrane-derived-oligosaccharide D-glucose = a 1,2-diacyl-sn-glycerol + a membrane-derived-oligosaccharide 6-(glycerophospho)-D-glucose.. It participates in glycan metabolism; osmoregulated periplasmic glucan (OPG) biosynthesis. In terms of biological role, transfers a phosphoglycerol residue from phosphatidylglycerol to the membrane-bound nascent glucan backbones. The protein is Phosphoglycerol transferase I of Salmonella arizonae (strain ATCC BAA-731 / CDC346-86 / RSK2980).